Consider the following 147-residue polypeptide: Small ribosomal subunit protein uS5 (147 aa).

One can recognise an S5 DRBM domain in the interval 9 to 72; that stretch reads FEEVVVNISR…DNAFKNITTV (64 aa).

The protein belongs to the universal ribosomal protein uS5 family. As to quaternary structure, part of the 30S ribosomal subunit. Contacts proteins S4 and S8.

Its function is as follows. With S4 and S12 plays an important role in translational accuracy. Functionally, located at the back of the 30S subunit body where it stabilizes the conformation of the head with respect to the body. The protein is Small ribosomal subunit protein uS5 of Nitratiruptor sp. (strain SB155-2).